We begin with the raw amino-acid sequence, 319 residues long: Ferrochelatase (319 aa).

Fe cation is bound by residues His193 and Glu274.

This sequence belongs to the ferrochelatase family.

The protein resides in the cytoplasm. The enzyme catalyses heme b + 2 H(+) = protoporphyrin IX + Fe(2+). It functions in the pathway porphyrin-containing compound metabolism; protoheme biosynthesis; protoheme from protoporphyrin-IX: step 1/1. Catalyzes the ferrous insertion into protoporphyrin IX. The polypeptide is Ferrochelatase (Actinobacillus pleuropneumoniae serotype 3 (strain JL03)).